Here is a 374-residue protein sequence, read N- to C-terminus: Potassium channel subfamily K member 9 (374 aa).

Over 1–8 the chain is Cytoplasmic; the sequence is MKRQNVRT. A helical transmembrane segment spans residues 9 to 29; that stretch reads LSLIVCTFTYLLVGAAVFDAL. Topologically, residues 30–88 are extracellular; the sequence is ESDHEMREEEKLKAEEIRIKGKYNISSEDYRQLELVILQSEPHRAGVQWKFAGSFYFAI. The N-linked (GlcNAc...) asparagine glycan is linked to asparagine 53. Residues 89 to 101 constitute an intramembrane region (pore-forming); the sequence is TVITTIGYGHAAP. K(+) is bound by residues threonine 93, isoleucine 94, glycine 95, and tyrosine 96. Residues 93 to 98 are selectivity filter 1; the sequence is TIGYGH. Topologically, residues 102 to 107 are extracellular; that stretch reads GTDAGK. Residues 108–128 traverse the membrane as a helical segment; that stretch reads AFCMFYAVLGIPLTLVMFQSL. At 129-158 the chain is on the cytoplasmic side; that stretch reads GERMNTFVRYLLKRIKKCCGMRNTDVSMEN. The helical transmembrane segment at 159-179 threads the bilayer; it reads MVTVGFFSCMGTLCIGAAAFS. Residues 180-194 lie on the Extracellular side of the membrane; that stretch reads QCEEWSFFHAYYYCF. Residues 195-207 constitute an intramembrane region (pore-forming); it reads ITLTTIGFGDYVA. Residues threonine 199, isoleucine 200, glycine 201, and phenylalanine 202 each contribute to the K(+) site. The selectivity filter 2 stretch occupies residues 199–204; it reads TIGFGD. Residues 208 to 218 lie on the Extracellular side of the membrane; that stretch reads LQTKGALQKKP. Residues 219-239 form a helical membrane-spanning segment; it reads LYVAFSFMYILVGLTVIGAFL. Residues 240–374 lie on the Cytoplasmic side of the membrane; sequence NLVVLRFLTM…QRLMKRRKSV (135 aa). Residues 243 to 248 form an X-gate region; it reads VLRFLT.

It belongs to the two pore domain potassium channel (TC 1.A.1.8) family. In terms of assembly, homodimer. Heterodimer with KCNK1. Heterodimer with KCNK3. Mainly found in the cerebellum. Also found in adrenal gland, kidney and lung.

It is found in the cell membrane. The protein resides in the mitochondrion inner membrane. The protein localises to the cell projection. Its subcellular location is the dendrite. The enzyme catalyses K(+)(in) = K(+)(out). The catalysed reaction is Na(+)(in) = Na(+)(out). With respect to regulation, inhibited by extracellular acidification adopting a nonconductive conformation at pH 6.0. Inhibited by phorbol 12-myristate 13-acetate (PMA). Its function is as follows. K(+) channel that conducts voltage-dependent outward rectifying currents upon membrane depolarization. Voltage sensing is coupled to K(+) electrochemical gradient in an 'ion flux gating' mode where outward but not inward ion flow opens the gate. Changes ion selectivity and becomes permeable to Na(+) ions in response to extracellular acidification. Protonation of the pH sensor His-98 stabilizes C-type inactivation conformation likely converting the channel from outward K(+)-conducting, to inward Na(+)-conducting to nonconductive state. Homo- and heterodimerizes to form functional channels with distinct regulatory and gating properties. Allows K(+) currents with fast-gating kinetics important for the repolarization and hyperpolarization phases of action potentials. In granule neurons, hyperpolarizes the resting membrane potential to limit intrinsic neuronal excitability, but once the action potential threshold is reached, supports high-frequency action potential firing and increased neuronal excitability. Homomeric and/or heteromeric KCNK3:KCNK9 channels operate in cerebellar granule cells, whereas heteromeric KCNK1:KCNK9 enables currents in hippocampal dentate gyrus granule neurons. Dispensable for central chemosensory respiration i.e. breathing controlled by brainstem CO2/pH, it rather conducts pH-sensitive currents and controls the firing rate of serotonergic raphe neurons involved in potentiation of the respiratory chemoreflex. In retinal ganglion cells, mediates outward currents that regulate action potentials in response to acidification of the synaptic cleft. Involved in transmission of image-forming and nonimage-forming visual information in the retina. In adrenal gland, contributes to the maintenance of a hyperpolarized resting membrane potential of aldosterone-producing cells at zona glomerulosa and limits aldosterone release as part of a regulatory mechanism that controls arterial blood pressure and electrolyte homeostasis. In Homo sapiens (Human), this protein is Potassium channel subfamily K member 9.